A 394-amino-acid chain; its full sequence is Elongation factor Tu (394 aa).

The region spanning 10-204 (KPHVNIGTIG…AVDSYIPQPV (195 aa)) is the tr-type G domain. The interval 19 to 26 (GHVDHGKT) is G1. 19–26 (GHVDHGKT) lines the GTP pocket. Thr-26 lines the Mg(2+) pocket. The G2 stretch occupies residues 60–64 (GITIS). Residues 81–84 (DCPG) form a G3 region. GTP is bound by residues 81-85 (DCPGH) and 136-139 (NKVD). The interval 136–139 (NKVD) is G4. The G5 stretch occupies residues 174–176 (SAL).

Belongs to the TRAFAC class translation factor GTPase superfamily. Classic translation factor GTPase family. EF-Tu/EF-1A subfamily. Monomer.

It is found in the cytoplasm. The enzyme catalyses GTP + H2O = GDP + phosphate + H(+). In terms of biological role, GTP hydrolase that promotes the GTP-dependent binding of aminoacyl-tRNA to the A-site of ribosomes during protein biosynthesis. In Rickettsia helvetica, this protein is Elongation factor Tu.